We begin with the raw amino-acid sequence, 136 residues long: Large ribosomal subunit protein uL16 (136 aa).

Over residues 1–17 (MLQPKRTKFRKRHKGRN) the composition is skewed to basic residues. Residues 1-21 (MLQPKRTKFRKRHKGRNRGLA) form a disordered region.

The protein belongs to the universal ribosomal protein uL16 family. Part of the 50S ribosomal subunit.

In terms of biological role, binds 23S rRNA and is also seen to make contacts with the A and possibly P site tRNAs. The chain is Large ribosomal subunit protein uL16 from Buchnera aphidicola subsp. Acyrthosiphon kondoi (Acyrthosiphon kondoi symbiotic bacterium).